The primary structure comprises 439 residues: Lactamase-like protein nscB (439 aa).

4 residues coordinate Zn(2+): histidine 214, histidine 216, aspartate 218, and histidine 219. The active-site Proton donor/acceptor is aspartate 218.

This sequence belongs to the metallo-beta-lactamase superfamily. It depends on Zn(2+) as a cofactor.

Its pathway is secondary metabolite biosynthesis. Its function is as follows. Lactamase-like protein; part of the gene cluster that mediates the biosynthesis of neosartoricin B, a prenylated anthracenone that probably exhibits T-cell antiproliferative activity, suggestive of a physiological role as an immunosuppressive agent. The non-reducing polyketide synthase nscA probably synthesizes and cyclizes the decaketide backbone. The hydrolase nscB then mediates the product release through hydrolysis followed by spontaneous decarboxylation. The prenyltransferase nscD catalyzes the addition of the dimethylallyl group to the aromatic C5. The FAD-dependent monooxygenase nscC is then responsible for the stereospecific hydroxylation at C2. Neosartoricin B can be converted into two additional compounds neosartoricins C and D. Neosartoricin C is a spirocyclic compound that is cyclized through the attack of C3 hydroxyl on C14, followed by dehydration. On the other hand, neosartoricin D is a further cyclized compound in which attack of C2 on C14 in neosartoricin C results in the formation of the acetal-containing dioxabicyclo-octanone ring. Both of these compounds are novel and possibly represent related metabolites of the gene cluster. The chain is Lactamase-like protein nscB from Arthroderma benhamiae (strain ATCC MYA-4681 / CBS 112371) (Trichophyton mentagrophytes).